A 329-amino-acid polypeptide reads, in one-letter code: DNA-directed RNA polymerase subunit alpha (329 aa).

Positions 1–233 are alpha N-terminal domain (alpha-NTD); that stretch reads MVREKVKVST…NLFIPFLHVE (233 aa). Residues 266–329 are alpha C-terminal domain (alpha-CTD); it reads TKELAFQYIF…KKILDILEKK (64 aa).

It belongs to the RNA polymerase alpha chain family. In plastids the minimal PEP RNA polymerase catalytic core is composed of four subunits: alpha, beta, beta', and beta''. When a (nuclear-encoded) sigma factor is associated with the core the holoenzyme is formed, which can initiate transcription.

The protein localises to the plastid. The protein resides in the chloroplast. The catalysed reaction is RNA(n) + a ribonucleoside 5'-triphosphate = RNA(n+1) + diphosphate. In terms of biological role, DNA-dependent RNA polymerase catalyzes the transcription of DNA into RNA using the four ribonucleoside triphosphates as substrates. The chain is DNA-directed RNA polymerase subunit alpha from Arabidopsis thaliana (Mouse-ear cress).